Here is a 728-residue protein sequence, read N- to C-terminus: Elongation factor 2 (728 aa).

In terms of domain architecture, tr-type G spans 19–261; sequence EQIRNIAIAA…MVAEHFPNPI (243 aa). Residues 28–35, 94–98, and 148–151 each bind GTP; these read AHVDHGKT, DTPGH, and NKVD. At H596 the chain carries Diphthamide.

Belongs to the TRAFAC class translation factor GTPase superfamily. Classic translation factor GTPase family. EF-G/EF-2 subfamily.

It is found in the cytoplasm. Catalyzes the GTP-dependent ribosomal translocation step during translation elongation. During this step, the ribosome changes from the pre-translocational (PRE) to the post-translocational (POST) state as the newly formed A-site-bound peptidyl-tRNA and P-site-bound deacylated tRNA move to the P and E sites, respectively. Catalyzes the coordinated movement of the two tRNA molecules, the mRNA and conformational changes in the ribosome. The protein is Elongation factor 2 of Halobacterium salinarum (strain ATCC 29341 / DSM 671 / R1).